Reading from the N-terminus, the 69-residue chain is Putative membrane protein insertion efficiency factor (69 aa).

The protein belongs to the UPF0161 family.

It localises to the cell membrane. Functionally, could be involved in insertion of integral membrane proteins into the membrane. The chain is Putative membrane protein insertion efficiency factor from Clostridium perfringens (strain SM101 / Type A).